We begin with the raw amino-acid sequence, 209 residues long: Imidazole glycerol phosphate synthase subunit HisH (209 aa).

The region spanning 5–209 is the Glutamine amidotransferase type-1 domain; it reads AIAIIDYDMG…LRNFVALVKD (205 aa). Cys-83 acts as the Nucleophile in catalysis. Active-site residues include His-188 and Glu-190.

Heterodimer of HisH and HisF.

It localises to the cytoplasm. It catalyses the reaction 5-[(5-phospho-1-deoxy-D-ribulos-1-ylimino)methylamino]-1-(5-phospho-beta-D-ribosyl)imidazole-4-carboxamide + L-glutamine = D-erythro-1-(imidazol-4-yl)glycerol 3-phosphate + 5-amino-1-(5-phospho-beta-D-ribosyl)imidazole-4-carboxamide + L-glutamate + H(+). The catalysed reaction is L-glutamine + H2O = L-glutamate + NH4(+). It functions in the pathway amino-acid biosynthesis; L-histidine biosynthesis; L-histidine from 5-phospho-alpha-D-ribose 1-diphosphate: step 5/9. Functionally, IGPS catalyzes the conversion of PRFAR and glutamine to IGP, AICAR and glutamate. The HisH subunit catalyzes the hydrolysis of glutamine to glutamate and ammonia as part of the synthesis of IGP and AICAR. The resulting ammonia molecule is channeled to the active site of HisF. This chain is Imidazole glycerol phosphate synthase subunit HisH, found in Thermosynechococcus vestitus (strain NIES-2133 / IAM M-273 / BP-1).